We begin with the raw amino-acid sequence, 255 residues long: Placenta-expressed transcript 1 protein (255 aa).

A signal peptide spans 1-26 (MPALRTLLPHLGLFLCLALCFSPSFS). Asparagine 57, asparagine 67, and asparagine 126 each carry an N-linked (GlcNAc...) asparagine glycan. A lipid anchor (GPI-anchor amidated serine) is attached at serine 236. The propeptide at 237–255 (PLAGALHILLVFLISKLLF) is removed in mature form.

Post-translationally, N-glycosylated. In terms of processing, GPI-anchored.

Its subcellular location is the apical cell membrane. Functionally, modulates leading keratinocyte migration and cellular adhesion to matrix proteins during a wound-healing response and promotes wound repair. May play a role during trichilemmal differentiation of the hair follicle. In Rattus norvegicus (Rat), this protein is Placenta-expressed transcript 1 protein (Plet1).